The following is a 212-amino-acid chain: Pyridoxine/pyridoxamine 5'-phosphate oxidase (212 aa).

Substrate contacts are provided by residues 8–11 (RRSY) and K66. FMN contacts are provided by residues 61–66 (RIVLLK), 76–77 (FT), R82, K83, and Q105. Residues Y123, R127, and S131 each coordinate substrate. Residues 140-141 (QS) and W184 each bind FMN. Substrate is bound at residue 190–192 (RLH). Position 194 (R194) interacts with FMN.

The protein belongs to the pyridoxamine 5'-phosphate oxidase family. Homodimer. Requires FMN as cofactor.

It carries out the reaction pyridoxamine 5'-phosphate + O2 + H2O = pyridoxal 5'-phosphate + H2O2 + NH4(+). It catalyses the reaction pyridoxine 5'-phosphate + O2 = pyridoxal 5'-phosphate + H2O2. The protein operates within cofactor metabolism; pyridoxal 5'-phosphate salvage; pyridoxal 5'-phosphate from pyridoxamine 5'-phosphate: step 1/1. Its pathway is cofactor metabolism; pyridoxal 5'-phosphate salvage; pyridoxal 5'-phosphate from pyridoxine 5'-phosphate: step 1/1. Its function is as follows. Catalyzes the oxidation of either pyridoxine 5'-phosphate (PNP) or pyridoxamine 5'-phosphate (PMP) into pyridoxal 5'-phosphate (PLP). The polypeptide is Pyridoxine/pyridoxamine 5'-phosphate oxidase (Cupriavidus necator (strain ATCC 17699 / DSM 428 / KCTC 22496 / NCIMB 10442 / H16 / Stanier 337) (Ralstonia eutropha)).